We begin with the raw amino-acid sequence, 129 residues long: Phosphoribosyl-AMP cyclohydrolase (129 aa).

Asp-76 lines the Mg(2+) pocket. Cys-77 is a Zn(2+) binding site. Residues Asp-78 and Asp-80 each coordinate Mg(2+). Residues Cys-97 and Cys-104 each coordinate Zn(2+).

Belongs to the PRA-CH family. As to quaternary structure, homodimer. It depends on Mg(2+) as a cofactor. Requires Zn(2+) as cofactor.

The protein localises to the cytoplasm. The enzyme catalyses 1-(5-phospho-beta-D-ribosyl)-5'-AMP + H2O = 1-(5-phospho-beta-D-ribosyl)-5-[(5-phospho-beta-D-ribosylamino)methylideneamino]imidazole-4-carboxamide. It participates in amino-acid biosynthesis; L-histidine biosynthesis; L-histidine from 5-phospho-alpha-D-ribose 1-diphosphate: step 3/9. Catalyzes the hydrolysis of the adenine ring of phosphoribosyl-AMP. The chain is Phosphoribosyl-AMP cyclohydrolase from Verminephrobacter eiseniae (strain EF01-2).